The chain runs to 160 residues: D-aminoacyl-tRNA deacylase 2 (160 aa).

A Gly-transPro motif, allows the protein to recognize chirality of D-amino acids motif is present at residues 152-153 (GP).

This sequence belongs to the DTD family. In terms of assembly, homodimer.

The protein localises to the cytoplasm. It catalyses the reaction a D-aminoacyl-tRNA + H2O = a tRNA + a D-alpha-amino acid + H(+). It carries out the reaction glycyl-tRNA(Ala) + H2O = tRNA(Ala) + glycine + H(+). The enzyme catalyses D-tyrosyl-tRNA(Tyr) + H2O = D-tyrosine + tRNA(Tyr). The catalysed reaction is L-alanyl-tRNA(Thr) + H2O = tRNA(Thr) + L-alanine + H(+). Functionally, deacylates mischarged D-aminoacyl-tRNAs. Also deacylates mischarged glycyl-tRNA(Ala), protecting cells against glycine mischarging by AlaRS. Probably acts by rejecting L-amino acids from its binding site rather than specific recognition of D-amino acids. Catalyzes the hydrolysis of D-tyrosyl-tRNA(Tyr), has no activity on correctly charged L-tyrosyl-tRNA(Tyr). By recycling D-aminoacyl-tRNA to D-amino acids and free tRNA molecules, this enzyme counteracts the toxicity associated with the formation of D-aminoacyl-tRNA entities in vivo and helps enforce protein L-homochirality. In contrast to DTD1, deacylates L-Ala mischarged on tRNA(Thr)(G4.U69) by alanine-tRNA ligase AARS. Can deacylate L-Ala due to a relaxed specificity for substrate chirality caused by the trans conformation of the Gly-Pro motif in the active site. Also hydrolyzes correctly charged, achiral, glycyl-tRNA(Gly) in vitro, although in vivo eef1a1a/EF-Tu may protect cognate achiral glycyl-tRNA(Gly) from DTD2-mediated deacetylation. This Danio rerio (Zebrafish) protein is D-aminoacyl-tRNA deacylase 2 (dtd2).